Here is a 189-residue protein sequence, read N- to C-terminus: Thymidine kinase (189 aa).

ATP is bound by residues 9–16 and 85–88; these read GTMNSGKT and DECQ. The active-site Proton acceptor is the Glu-86. Cys-143, Cys-146, Cys-180, and His-183 together coordinate Zn(2+).

It belongs to the thymidine kinase family. In terms of assembly, homotetramer.

It is found in the cytoplasm. It carries out the reaction thymidine + ATP = dTMP + ADP + H(+). The polypeptide is Thymidine kinase (Streptococcus agalactiae serotype Ia (strain ATCC 27591 / A909 / CDC SS700)).